A 198-amino-acid chain; its full sequence is Fimbriae W protein (198 aa).

An HTH luxR-type domain is found at 127–192 (HYCTTRHFSV…QFLKYIRVNL (66 aa)).

It is found in the fimbrium. This chain is Fimbriae W protein (fimW), found in Salmonella typhimurium (strain LT2 / SGSC1412 / ATCC 700720).